Here is a 1047-residue protein sequence, read N- to C-terminus: Isoleucine--tRNA ligase (1047 aa).

The 'HIGH' region signature appears at 52-62 (PTANGMPGAHH). Positions 600–604 (KMSKH) match the 'KMSKS' region motif. ATP is bound at residue K603.

The protein belongs to the class-I aminoacyl-tRNA synthetase family. IleS type 2 subfamily. In terms of assembly, monomer. Zn(2+) is required as a cofactor.

The protein resides in the cytoplasm. The catalysed reaction is tRNA(Ile) + L-isoleucine + ATP = L-isoleucyl-tRNA(Ile) + AMP + diphosphate. In terms of biological role, catalyzes the attachment of isoleucine to tRNA(Ile). As IleRS can inadvertently accommodate and process structurally similar amino acids such as valine, to avoid such errors it has two additional distinct tRNA(Ile)-dependent editing activities. One activity is designated as 'pretransfer' editing and involves the hydrolysis of activated Val-AMP. The other activity is designated 'posttransfer' editing and involves deacylation of mischarged Val-tRNA(Ile). This Streptomyces avermitilis (strain ATCC 31267 / DSM 46492 / JCM 5070 / NBRC 14893 / NCIMB 12804 / NRRL 8165 / MA-4680) protein is Isoleucine--tRNA ligase.